The sequence spans 431 residues: Urokinase-type plasminogen activator (431 aa).

A signal peptide spans 1 to 20; that stretch reads MRALLARLLLCVLVVSDSKG. Positions 27–63 constitute an EGF-like domain; it reads VPSNCDCLNGGTCVSNKYFSNIHWCNCPKKFGGQHCE. 6 cysteine pairs are disulfide-bonded: Cys31-Cys39, Cys33-Cys51, Cys53-Cys62, Cys70-Cys151, Cys91-Cys133, and Cys122-Cys146. The tract at residues 34-57 is binds urokinase plasminogen activator surface receptor; sequence LNGGTCVSNKYFSNIHWCNCPKKF. Thr38 carries O-linked (Fuc) threonine glycosylation. The region spanning 70–151 is the Kringle domain; sequence CYEGNGHFYR…LVQECMVHDC (82 aa). Residues 152–177 form a connecting peptide region; the sequence is ADGKKPSSPPEELKFQCGQKTLRPRF. Phosphoserine is present on Ser158. Cystine bridges form between Cys168-Cys299, Cys209-Cys225, Cys217-Cys288, Cys313-Cys382, Cys345-Cys361, and Cys372-Cys400. Positions 179–424 constitute a Peptidase S1 domain; that stretch reads IIGGEFTTIE…FLPWIRSHTK (246 aa). Residues His224 and Asp275 each act as charge relay system in the active site. Asn322 is a glycosylation site (N-linked (GlcNAc...) asparagine). Ser323 carries the post-translational modification Phosphoserine. Catalysis depends on Ser376, which acts as the Charge relay system.

It belongs to the peptidase S1 family. In terms of assembly, found in high and low molecular mass forms. Each consists of two chains, A and B. The high molecular mass form contains a long chain A which is cleaved to yield a short chain A. Forms heterodimer with SERPINA5. Binds LRP1B; binding is followed by internalization and degradation. Interacts with MRC2. Interacts with PLAUR. In complex with SERPINE1, interacts with PLAUR/uPAR. Interacts with SORL1 and LRP1, either alone or in complex with SERPINE1; these interactions are abolished in the presence of LRPAP1/RAP. The ternary complex composed of PLAUR-PLAU-PAI1 also interacts with SORLA. Post-translationally, phosphorylation of Ser-158 and Ser-323 abolishes proadhesive ability but does not interfere with receptor binding. Produced as an inactive single-chain protein (pro-uPA or sc-uPA), is processed into the active disulfide-linked two-chain form of PLAU/uPA by a proteolytic event mediated, at least, by TMPRSS4. As to expression, expressed in the prostate gland and prostate cancers.

It is found in the secreted. The catalysed reaction is Specific cleavage of Arg-|-Val bond in plasminogen to form plasmin.. With respect to regulation, inhibited by SERPINA5. Inhibited by SERPINE1. In terms of biological role, specifically cleaves the zymogen plasminogen to form the active enzyme plasmin. In Homo sapiens (Human), this protein is Urokinase-type plasminogen activator.